Reading from the N-terminus, the 155-residue chain is uncharacterized protein (155 aa).

The HTH asnC-type domain maps to 4 to 65; sequence IDEIDEIIVR…VVDTSFFGEF (62 aa). The segment at residues 23–42 is a DNA-binding region (H-T-H motif); that stretch reads LTELGKKVGLTASAVKNRIE.

This is an uncharacterized protein from Pyrococcus abyssi (strain GE5 / Orsay).